The following is a 215-amino-acid chain: 3-demethoxyubiquinol 3-hydroxylase (215 aa).

Residues glutamate 64, glutamate 94, histidine 97, glutamate 146, glutamate 178, and histidine 181 each contribute to the Fe cation site.

This sequence belongs to the COQ7 family. Requires Fe cation as cofactor.

It localises to the cell membrane. The catalysed reaction is a 5-methoxy-2-methyl-3-(all-trans-polyprenyl)benzene-1,4-diol + AH2 + O2 = a 3-demethylubiquinol + A + H2O. It functions in the pathway cofactor biosynthesis; ubiquinone biosynthesis. Catalyzes the hydroxylation of 2-nonaprenyl-3-methyl-6-methoxy-1,4-benzoquinol during ubiquinone biosynthesis. The protein is 3-demethoxyubiquinol 3-hydroxylase of Ectopseudomonas mendocina (strain ymp) (Pseudomonas mendocina).